We begin with the raw amino-acid sequence, 693 residues long: DNA ligase (693 aa).

Residues 45–49 (DSEYD), 94–95 (SI), and glutamate 131 contribute to the NAD(+) site. Lysine 133 functions as the N6-AMP-lysine intermediate in the catalytic mechanism. Residues arginine 154, glutamate 190, lysine 307, and lysine 331 each coordinate NAD(+). Residues cysteine 429, cysteine 432, cysteine 447, and cysteine 453 each coordinate Zn(2+). The 79-residue stretch at 615-693 (ASSSKLEGKT…EEGLLSLLAE (79 aa)) folds into the BRCT domain.

It belongs to the NAD-dependent DNA ligase family. LigA subfamily. Mg(2+) serves as cofactor. It depends on Mn(2+) as a cofactor.

The catalysed reaction is NAD(+) + (deoxyribonucleotide)n-3'-hydroxyl + 5'-phospho-(deoxyribonucleotide)m = (deoxyribonucleotide)n+m + AMP + beta-nicotinamide D-nucleotide.. DNA ligase that catalyzes the formation of phosphodiester linkages between 5'-phosphoryl and 3'-hydroxyl groups in double-stranded DNA using NAD as a coenzyme and as the energy source for the reaction. It is essential for DNA replication and repair of damaged DNA. This Methylobacillus flagellatus (strain ATCC 51484 / DSM 6875 / VKM B-1610 / KT) protein is DNA ligase.